The chain runs to 271 residues: Putative pirin-like protein At3g59260 (271 aa).

The protein belongs to the pirin family.

The protein resides in the nucleus. This Arabidopsis thaliana (Mouse-ear cress) protein is Putative pirin-like protein At3g59260.